Reading from the N-terminus, the 372-residue chain is Alanine racemase (372 aa).

The Proton acceptor; specific for D-alanine role is filled by K35. K35 is modified (N6-(pyridoxal phosphate)lysine). A substrate-binding site is contributed by R143. The active-site Proton acceptor; specific for L-alanine is Y268. M316 provides a ligand contact to substrate.

Belongs to the alanine racemase family. Requires pyridoxal 5'-phosphate as cofactor.

It catalyses the reaction L-alanine = D-alanine. It functions in the pathway amino-acid biosynthesis; D-alanine biosynthesis; D-alanine from L-alanine: step 1/1. Functionally, catalyzes the interconversion of L-alanine and D-alanine. May also act on other amino acids. This is Alanine racemase (alr) from Shewanella frigidimarina (strain NCIMB 400).